Consider the following 819-residue polypeptide: Nuclear pore complex protein Nup93 (819 aa).

Thr-49 bears the Phosphothreonine mark. Ser-52, Ser-66, Ser-72, Ser-75, Ser-80, Ser-430, and Ser-767 each carry phosphoserine.

Belongs to the nucleoporin interacting component (NIC) family. In terms of assembly, part of the nuclear pore complex (NPC). Component of the p62 complex, a complex composed of NUP62 and NUP54. Forms a complex with NUP35, NUP155, NUP205 and lamin B; the interaction with NUP35 is direct. Does not interact with TPR. Interacts with SMAD4 and IPO7; translocates SMAD4 to the nucleus through the NPC upon BMP7 stimulation resulting in activation of SMAD4 signaling.

It localises to the nucleus membrane. The protein localises to the nucleus. The protein resides in the nuclear pore complex. Its subcellular location is the nucleus envelope. Plays a role in the nuclear pore complex (NPC) assembly and/or maintenance. May anchor nucleoporins, but not NUP153 and TPR, to the NPC. During renal development, regulates podocyte migration and proliferation through SMAD4 signaling. This Bos taurus (Bovine) protein is Nuclear pore complex protein Nup93 (NUP93).